The following is a 505-amino-acid chain: Alpha-1-syntrophin (505 aa).

2 disordered regions span residues 1–25 and 40–77; these read MASG…GAGG and LTVS…PPQL. PH domains follow at residues 6–269 and 293–401; these read RAPR…AQVN and DIKQ…DGCH. A PDZ domain is found at 87 to 170; that stretch reads RVTVRKADAG…EVVLEVKYMK (84 aa). 5 positions are modified to phosphoserine: S101, S184, S189, S193, and S200. A disordered region spans residues 180–210; the sequence is TGGTSVGWDSPPASPLQRQPSSPGPTPRNFS. Residues 449 to 505 enclose the SU domain; it reads PFEKLQMSSDDGASLLFLDFGGAEGEIQLDLHSCPKTIVFIIHSFLSAKVTRLGLLA. The calmodulin-binding stretch occupies residues 483-505; it reads PKTIVFIIHSFLSAKVTRLGLLA.

This sequence belongs to the syntrophin family. In terms of assembly, monomer and homodimer. Interacts with the other members of the syntrophin family SNTB1 and SNTB2; SGCG and SGCA of the dystrophin glycoprotein complex; NOS1; GRB2; the sodium channel proteins SCN4A and SCN5A; F-actin and calmodulin. Interacts with dystrophin protein DMD and related proteins DTNA and UTRN and with MAPK12, TGFA and GA. Interacts with MYOC; regulates muscle hypertrophy. Interacts with DTNB. Phosphorylated by CaM-kinase II. Phosphorylation may inhibit the interaction with DMD. In terms of tissue distribution, high expression in skeletal muscle and heart. Low expression in brain, pancreas, liver, kidney and lung. Not detected in placenta.

It localises to the cell membrane. The protein localises to the sarcolemma. Its subcellular location is the cell junction. The protein resides in the cytoplasm. It is found in the cytoskeleton. In terms of biological role, adapter protein that binds to and probably organizes the subcellular localization of a variety of membrane proteins. May link various receptors to the actin cytoskeleton and the extracellular matrix via the dystrophin glycoprotein complex. Plays an important role in synapse formation and in the organization of UTRN and acetylcholine receptors at the neuromuscular synapse. Binds to phosphatidylinositol 4,5-bisphosphate. This chain is Alpha-1-syntrophin (SNTA1), found in Homo sapiens (Human).